The primary structure comprises 306 residues: Protein YIPF1 (306 aa).

Over 1–119 the chain is Cytoplasmic; that stretch reads MAAVDDLQFE…VRLYIRSNPD (119 aa). Residues 14–62 are disordered; sequence NAATSLTANPDATTVNIEDPGETPKHQPGSPRGSGREEDDELLGNDDSD. Over residues 15–29 the composition is skewed to polar residues; that stretch reads AATSLTANPDATTVN. Residues 50-59 are compositionally biased toward acidic residues; the sequence is EEDDELLGND. The chain crosses the membrane as a helical span at residues 120-140; it reads LYGPFWICATLVFAIAISGNL. At 141–162 the chain is on the lumenal side; sequence SNFLIHLGEKTYHYVPEFRKVS. A helical membrane pass occupies residues 163-183; sequence IAATIIYAYAWLVPLALWGFL. Over 184 to 200 the chain is Cytoplasmic; it reads MWRNSKVMNIVSYSFLE. The helical transmembrane segment at 201–221 threads the bilayer; sequence IVCVYGYSLFIYIPTAILWII. Topologically, residues 222–227 are lumenal; it reads PQKAVR. A helical transmembrane segment spans residues 228–248; the sequence is WILVMIALGISGSLLAMTFWP. Residues 249–256 lie on the Cytoplasmic side of the membrane; that stretch reads AVREDNRR. Residues 257–277 traverse the membrane as a helical segment; it reads VALATIVTIVLLHMLLSVGCL. Over 278–306 the chain is Lumenal; sequence AYFFDAPEMDHLPTTTATPNQTVAAAKSS. Asn297 carries N-linked (GlcNAc...) asparagine glycosylation.

The protein belongs to the YIP1 family. In terms of assembly, interacts with YIPF6; this interaction may stabilize YIPF1. May also form a ternary complex with YIPF2 and YIPF6.

The protein resides in the golgi apparatus. It is found in the cis-Golgi network membrane. The protein localises to the trans-Golgi network membrane. Its subcellular location is the late endosome membrane. This chain is Protein YIPF1 (YIPF1), found in Homo sapiens (Human).